The chain runs to 868 residues: Rifampicin phosphotransferase (868 aa).

Positions 5 to 317 are ATP-binding; that stretch reads TERYVLDLQE…FHIVQSRPIT (313 aa). Residues Lys-26, Arg-120, Gly-135, Thr-139, Gln-186, Glu-300, Gln-312, and Arg-314 each coordinate ATP. The interval 330 to 755 is rifampicin-binding; sequence NHVYVSVGHQ…TSDGEALTGA (426 aa). A disordered region spans residues 410–430; it reads FVPSLPDAPPAGPRAGAAPEP. The swivel phosphohistidine stretch occupies residues 768–866; the sequence is GLPVSTGTVE…VHGTDGYIEI (99 aa). His-826 (tele-phosphohistidine intermediate) is an active-site residue.

It belongs to the rifampicin phosphotransferase family.

The enzyme catalyses rifampicin + ATP + H2O = 21-phosphorifampicin + AMP + phosphate + 2 H(+). Catalyzes the phosphorylation of rifampicin, also known as rifampin (RIF), leading to its inactivation. Confers high level resistance to a variety of clinically used rifamycin antibiotics. Does not show phosphoenolpyruvate (PEP) synthase activity. This chain is Rifampicin phosphotransferase, found in Streptomyces sviceus (strain ATCC 29083 / DSM 924 / JCM 4929 / NBRC 13980 / NCIMB 11184 / NRRL 5439 / UC 5370).